The following is a 142-amino-acid chain: MKYVAIDYGTKYTGIAVSDSMGVFAFPKQSIIMTTQKEFFIKLVELIYVESPDALVVGLPVLFDNSETLITRQVRNFIKRLKHKIMLPVFLMKEILSSYEAKLDLQSVGYRKNKIKSVLDQQAAVRILQSFLDQSESERVQV.

This sequence belongs to the YqgF nuclease family.

The protein resides in the cytoplasm. Its function is as follows. Could be a nuclease involved in processing of the 5'-end of pre-16S rRNA. The sequence is that of Putative pre-16S rRNA nuclease from Lawsonia intracellularis (strain PHE/MN1-00).